We begin with the raw amino-acid sequence, 428 residues long: Serine--tRNA ligase (428 aa).

An L-serine-binding site is contributed by Thr-231–Glu-233. ATP is bound by residues Arg-262 to Glu-264 and Val-278. L-serine is bound at residue Glu-285. Glu-349–Ser-352 is an ATP binding site. Position 384 (Thr-384) interacts with L-serine.

The protein belongs to the class-II aminoacyl-tRNA synthetase family. Type-1 seryl-tRNA synthetase subfamily. As to quaternary structure, homodimer. The tRNA molecule binds across the dimer.

Its subcellular location is the cytoplasm. It catalyses the reaction tRNA(Ser) + L-serine + ATP = L-seryl-tRNA(Ser) + AMP + diphosphate + H(+). The enzyme catalyses tRNA(Sec) + L-serine + ATP = L-seryl-tRNA(Sec) + AMP + diphosphate + H(+). It participates in aminoacyl-tRNA biosynthesis; selenocysteinyl-tRNA(Sec) biosynthesis; L-seryl-tRNA(Sec) from L-serine and tRNA(Sec): step 1/1. Functionally, catalyzes the attachment of serine to tRNA(Ser). Is also able to aminoacylate tRNA(Sec) with serine, to form the misacylated tRNA L-seryl-tRNA(Sec), which will be further converted into selenocysteinyl-tRNA(Sec). The protein is Serine--tRNA ligase of Bifidobacterium animalis subsp. lactis (strain AD011).